The primary structure comprises 461 residues: Glycerol-3-phosphate acyltransferase, chloroplastic (461 aa).

Residues methionine 1–serine 96 constitute a chloroplast transit peptide. The span at leucine 47–proline 76 shows a compositional bias: low complexity. A disordered region spans residues leucine 47–proline 88. The HXXXXD motif motif lies at histidine 231 to aspartate 236.

It belongs to the GPAT/DAPAT family.

Its subcellular location is the plastid. It localises to the chloroplast stroma. The enzyme catalyses sn-glycerol 3-phosphate + an acyl-CoA = a 1-acyl-sn-glycero-3-phosphate + CoA. The protein operates within phospholipid metabolism; CDP-diacylglycerol biosynthesis; CDP-diacylglycerol from sn-glycerol 3-phosphate: step 1/3. Esterifies acyl-group from acyl-ACP to the sn-1 position of glycerol-3-phosphate. The enzyme from chilling-resistant plants discriminates against non-fluid palmitic acid and selects oleic acid whereas the enzyme from sensitive plants accepts both fatty acids. The protein is Glycerol-3-phosphate acyltransferase, chloroplastic (PLSB) of Phaseolus vulgaris (Kidney bean).